Reading from the N-terminus, the 451-residue chain is Tubulin alpha chain (451 aa).

Q11 is a binding site for GTP. K40 carries the post-translational modification N6-acetyllysine. The GTP site is built by E71, G144, T145, T179, N206, and N228. E71 lines the Mg(2+) pocket. Residue E254 is part of the active site.

Belongs to the tubulin family. As to quaternary structure, dimer of alpha and beta chains. A typical microtubule is a hollow water-filled tube with an outer diameter of 25 nm and an inner diameter of 15 nM. Alpha-beta heterodimers associate head-to-tail to form protofilaments running lengthwise along the microtubule wall with the beta-tubulin subunit facing the microtubule plus end conferring a structural polarity. Microtubules usually have 13 protofilaments but different protofilament numbers can be found in some organisms and specialized cells. Requires Mg(2+) as cofactor. Post-translationally, undergoes a tyrosination/detyrosination cycle, the cyclic removal and re-addition of a C-terminal tyrosine residue by the enzymes tubulin tyrosine carboxypeptidase (TTCP) and tubulin tyrosine ligase (TTL), respectively. In terms of processing, acetylation of alpha chains at Lys-40 stabilizes microtubules and affects affinity and processivity of microtubule motors. This modification has a role in multiple cellular functions, ranging from cell motility, cell cycle progression or cell differentiation to intracellular trafficking and signaling.

The protein localises to the cytoplasm. The protein resides in the cytoskeleton. The enzyme catalyses GTP + H2O = GDP + phosphate + H(+). Functionally, tubulin is the major constituent of microtubules, a cylinder consisting of laterally associated linear protofilaments composed of alpha- and beta-tubulin heterodimers. Microtubules grow by the addition of GTP-tubulin dimers to the microtubule end, where a stabilizing cap forms. Below the cap, tubulin dimers are in GDP-bound state, owing to GTPase activity of alpha-tubulin. This chain is Tubulin alpha chain (TUBA), found in Chlorella vulgaris (Green alga).